A 374-amino-acid chain; its full sequence is Ribosomal RNA large subunit methyltransferase G (374 aa).

This sequence belongs to the methyltransferase superfamily. RlmG family.

It is found in the cytoplasm. The enzyme catalyses guanosine(1835) in 23S rRNA + S-adenosyl-L-methionine = N(2)-methylguanosine(1835) in 23S rRNA + S-adenosyl-L-homocysteine + H(+). Its function is as follows. Specifically methylates the guanine in position 1835 (m2G1835) of 23S rRNA. In Ectopseudomonas mendocina (strain ymp) (Pseudomonas mendocina), this protein is Ribosomal RNA large subunit methyltransferase G.